The following is a 97-amino-acid chain: Co-chaperonin GroES (97 aa).

The protein belongs to the GroES chaperonin family. In terms of assembly, heptamer of 7 subunits arranged in a ring. Interacts with the chaperonin GroEL.

Its subcellular location is the cytoplasm. Functionally, together with the chaperonin GroEL, plays an essential role in assisting protein folding. The GroEL-GroES system forms a nano-cage that allows encapsulation of the non-native substrate proteins and provides a physical environment optimized to promote and accelerate protein folding. GroES binds to the apical surface of the GroEL ring, thereby capping the opening of the GroEL channel. The protein is Co-chaperonin GroES of Edwardsiella ictaluri (strain 93-146).